The primary structure comprises 346 residues: Annexin A1 (346 aa).

Position 5 is a phosphoserine; by TRPM7 (serine 5). Glutamine 19 is covalently cross-linked (Isoglutamyl lysine isopeptide (Gln-Lys) (interchain with K-?)). Tyrosine 21 is modified (phosphotyrosine; by EGFR). Serine 27 bears the Phosphoserine; by PKC mark. Phosphoserine is present on residues serine 34 and serine 37. 4 Annexin repeats span residues phenylalanine 42–lysine 113, threonine 114–lysine 185, aspartate 197–lysine 269, and serine 273–glycine 344. Lysine 58 carries the post-translational modification N6-acetyllysine. The Ca(2+) site is built by glycine 59, valine 60, glutamate 62, lysine 97, leucine 100, glutamate 105, methionine 127, glycine 129, glycine 131, threonine 132, and glutamate 134. Threonine 136 bears the Phosphothreonine mark. The Ca(2+) site is built by aspartate 171, glycine 210, and arginine 213. Lysine 214 participates in a covalent cross-link: Glycyl lysine isopeptide (Lys-Gly) (interchain with G-Cter in SUMO1); alternate. Residue lysine 214 forms a Glycyl lysine isopeptide (Lys-Gly) (interchain with G-Cter in SUMO2); alternate linkage. Glycine 215 contacts Ca(2+). Lysine 239 carries the N6-acetyllysine modification. Ca(2+) contacts are provided by aspartate 253, glutamate 255, and leucine 256. Residue lysine 257 forms a Glycyl lysine isopeptide (Lys-Gly) (interchain with G-Cter in SUMO1) linkage. Ca(2+) is bound by residues glutamate 261, methionine 286, glycine 288, and glycine 290. Lysine 312 bears the N6-acetyllysine mark. Cysteine 324 and cysteine 343 are disulfide-bonded. 3 residues coordinate Ca(2+): leucine 328, glutamate 330, and threonine 331. Residue lysine 332 forms a Glycyl lysine isopeptide (Lys-Gly) (interchain with G-Cter in SUMO1) linkage. Glutamate 336 serves as a coordination point for Ca(2+).

It belongs to the annexin family. As to quaternary structure, homodimer; non-covalently linked. Homodimer; linked by transglutamylation. Homodimers linked by transglutamylation are observed in placenta, but not in other tissues. Interacts with S100A11. Heterotetramer, formed by two molecules each of S100A11 and ANXA1. Interacts with DYSF. Interacts with EGFR. In terms of processing, phosphorylated by protein kinase C, EGFR and TRPM7. Phosphorylated in response to EGF treatment. Post-translationally, sumoylated. Proteolytically cleaved by cathepsin CTSG to release the active N-terminal peptide Ac2-26.

It localises to the nucleus. The protein resides in the cytoplasm. The protein localises to the cell projection. It is found in the cilium. Its subcellular location is the basolateral cell membrane. It localises to the lateral cell membrane. The protein resides in the cell membrane. The protein localises to the apical cell membrane. It is found in the membrane. Its subcellular location is the endosome membrane. It localises to the secreted. The protein resides in the extracellular space. The protein localises to the early endosome. It is found in the cytoplasmic vesicle membrane. Its subcellular location is the extracellular exosome. It localises to the cytoplasmic vesicle. The protein resides in the secretory vesicle lumen. The protein localises to the phagocytic cup. Functionally, plays important roles in the innate immune response as effector of glucocorticoid-mediated responses and regulator of the inflammatory process. Has anti-inflammatory activity. Plays a role in glucocorticoid-mediated down-regulation of the early phase of the inflammatory response. Contributes to the adaptive immune response by enhancing signaling cascades that are triggered by T-cell activation, regulates differentiation and proliferation of activated T-cells. Promotes the differentiation of T-cells into Th1 cells and negatively regulates differentiation into Th2 cells. Has no effect on unstimulated T-cells. Negatively regulates hormone exocytosis via activation of the formyl peptide receptors and reorganization of the actin cytoskeleton. Has high affinity for Ca(2+) and can bind up to eight Ca(2+) ions. Displays Ca(2+)-dependent binding to phospholipid membranes. Plays a role in the formation of phagocytic cups and phagosomes. Plays a role in phagocytosis by mediating the Ca(2+)-dependent interaction between phagosomes and the actin cytoskeleton. In terms of biological role, functions at least in part by activating the formyl peptide receptors and downstream signaling cascades. Promotes chemotaxis of granulocytes and monocytes via activation of the formyl peptide receptors. Promotes rearrangement of the actin cytoskeleton, cell polarization and cell migration. Promotes resolution of inflammation and wound healing. Acts via neutrophil N-formyl peptide receptors to enhance the release of CXCL2. This chain is Annexin A1 (ANXA1), found in Cavia cutleri (Guinea pig).